A 394-amino-acid polypeptide reads, in one-letter code: Ceramide glucosyltransferase-A (394 aa).

Residues 1–10 (MAVLDLALQG) lie on the Lumenal side of the membrane. The helical transmembrane segment at 11–32 (LAIFGCVLFFVLWFMHFLSIVY) threads the bilayer. Residues 33 to 195 (TRLHLNKKIS…QVYFGTSHPR (163 aa)) are Cytoplasmic-facing. A short sequence motif (D1) is located at residue Asp92. Asp144 is a short sequence motif (D2). A helical membrane pass occupies residues 196 to 215 (SYISANVTGFKCVTGMSCLM). At 216–287 (RKEVLDQAGG…KLRINMLPAT (72 aa)) the chain is on the lumenal side. A short sequence motif (D3) is located at residue Asp236. The Proton acceptor role is filled by Asp236. A (Q/R)XXRW motif is present at residues 272–276 (RMIRW). The chain crosses the membrane as a helical span at residues 288-304 (IICEPISECFVASLIIG). Over 305–309 (WAAHH) the chain is Cytoplasmic. Residues 310 to 328 (IFRWDIMVFFMCHCLAWFI) traverse the membrane as a helical segment. The Lumenal segment spans residues 329-348 (FDYIQLRGVQGGPLNFSKLD). Residues 349–369 (YAVAWFIRESMTIYIFLSALW) form a helical membrane-spanning segment. Topologically, residues 370–394 (DPTISWRTGRFRLRCGGTAEEILDV) are cytoplasmic.

The protein belongs to the glycosyltransferase 2 family. At the late gastrula stage, weakly expressed ubiquitously. As neurulation proceeds (stages 15-16), expression moves towards the dorsal structures: involuted paraxial mesoderm and neural folds. In the tailbud embryo (stage 28), expression is restricted to the notochord. At later stages (stage 35), expression remains in the notochord and also appears weakly in the cephalic region.

The protein localises to the golgi apparatus membrane. It carries out the reaction an N-acylsphing-4-enine + UDP-alpha-D-glucose = a beta-D-glucosyl-(1&lt;-&gt;1')-N-acylsphing-4-enine + UDP + H(+). It catalyses the reaction UDP-alpha-D-xylose + an N-acylsphing-4-enine = a beta-D-xylosyl-(1&lt;-&gt;1')-N-acylsphing-4-enine + UDP + H(+). The catalysed reaction is N-(9Z-octadecenoyl)-sphing-4-enine + UDP-alpha-D-xylose = beta-D-xylosyl-(1&lt;-&gt;1')-N-(9Z-octadecenoyl)-sphing-4-enine + UDP + H(+). The protein operates within lipid metabolism; sphingolipid metabolism. Functionally, participates in the initial step of the glucosylceramide-based glycosphingolipid/GSL synthetic pathway at the cytosolic surface of the Golgi. Catalyzes the transfer of glucose from UDP-glucose to ceramide to produce glucosylceramide/GlcCer (such as beta-D-glucosyl-(1&lt;-&gt;1')-N-acylsphing-4-enine). Glucosylceramide is the core component of glycosphingolipids/GSLs, amphipathic molecules consisting of a ceramide lipid moiety embedded in the outer leaflet of the membrane, linked to one of hundreds of different externally oriented oligosaccharide structures. Glycosphingolipids are essential components of membrane microdomains that mediate membrane trafficking and signal transduction. They are implicated in many fundamental cellular processes, including growth, differentiation, migration, morphogenesis, cell-to-cell and cell-to-matrix interactions. Glycosphingolipids are required for convergence extension movements during early development. Catalyzes the synthesis of xylosylceramide/XylCer (such as beta-D-xylosyl-(1&lt;-&gt;1')-N-acylsphing-4-enine) using UDP-Xyl as xylose donor. The polypeptide is Ceramide glucosyltransferase-A (ugcg-a) (Xenopus laevis (African clawed frog)).